The sequence spans 584 residues: Membrane protein insertase YidC (584 aa).

5 helical membrane passes run Ser5–Pro25, Phe358–Tyr378, Leu428–Phe448, Ile478–Leu498, and Ile516–Leu536. The tract at residues Ala563–Arg584 is disordered. Basic residues predominate over residues Ala574 to Arg584.

Belongs to the OXA1/ALB3/YidC family. Type 1 subfamily. Interacts with the Sec translocase complex via SecD. Specifically interacts with transmembrane segments of nascent integral membrane proteins during membrane integration.

It is found in the cell inner membrane. Functionally, required for the insertion and/or proper folding and/or complex formation of integral membrane proteins into the membrane. Involved in integration of membrane proteins that insert both dependently and independently of the Sec translocase complex, as well as at least some lipoproteins. Aids folding of multispanning membrane proteins. This Prosthecochloris aestuarii (strain DSM 271 / SK 413) protein is Membrane protein insertase YidC.